The following is a 38-amino-acid chain: Photosystem II reaction center protein L (38 aa).

The chain crosses the membrane as a helical span at residues 17-37 (SLYWGLLLIFVLAILFSNYFF).

It belongs to the PsbL family. PSII is composed of 1 copy each of membrane proteins PsbA, PsbB, PsbC, PsbD, PsbE, PsbF, PsbH, PsbI, PsbJ, PsbK, PsbL, PsbM, PsbT, PsbX, PsbY, PsbZ, Psb30/Ycf12, at least 3 peripheral proteins of the oxygen-evolving complex and a large number of cofactors. It forms dimeric complexes.

The protein localises to the plastid. It localises to the chloroplast thylakoid membrane. One of the components of the core complex of photosystem II (PSII). PSII is a light-driven water:plastoquinone oxidoreductase that uses light energy to abstract electrons from H(2)O, generating O(2) and a proton gradient subsequently used for ATP formation. It consists of a core antenna complex that captures photons, and an electron transfer chain that converts photonic excitation into a charge separation. This subunit is found at the monomer-monomer interface and is required for correct PSII assembly and/or dimerization. This Aethionema cordifolium (Lebanon stonecress) protein is Photosystem II reaction center protein L.